Consider the following 664-residue polypeptide: Acid beta-fructofuranosidase 4, vacuolar (664 aa).

Topologically, residues 1–43 are cytoplasmic; the sequence is MASSDALLPISAREEEPLCPYTRLPMADPNQETHGPRRRRPFK. Residues 1–108 constitute a propeptide, removed in mature form; that stretch reads MASSDALLPI…WKLSGDRNTP (108 aa). 2 short sequence motifs (critical for endoplasmic reticulum export) span residues 7–8 and 9–10; these read LL and PI. The Critical for trafficking from the trans-Golgi network to the prevacuolar compartment and from the prevacuolar compartment to the central vacuole signature appears at 14–16; it reads EEE. A helical; Signal-anchor for type II membrane protein membrane pass occupies residues 44 to 64; the sequence is GLLAVSFGLLFIAFYVALIAT. Over 65–664 the chain is Lumenal; it reads HDGSRSNDEG…DEAVRALSRT (600 aa). The N-linked (GlcNAc...) asparagine glycan is linked to Asn-113. Substrate contacts are provided by residues 132–135, Gln-151, Trp-159, 194–195, and 258–259; these read WMND, WT, and RD. Residue Asp-135 is part of the active site. Asn-280 carries an N-linked (GlcNAc...) (complex) asparagine glycan. Substrate is bound by residues Glu-313 and Asp-346. Asn-362 and Asn-498 each carry an N-linked (GlcNAc...) asparagine glycan. Cys-510 and Cys-558 are joined by a disulfide.

This sequence belongs to the glycosyl hydrolase 32 family. In terms of assembly, may be present in two forms, a 70 kDa monomer and a heterodimer of the 30 kDa and 38 kDa subunits. The ratio of the levels of the two forms within cells appears to be regulated developmentally. Mostly expressed in stems, roots and flowers, and, to a lower extent, in mature leaves.

It localises to the vacuole. Its subcellular location is the endoplasmic reticulum membrane. The protein localises to the golgi apparatus membrane. It is found in the golgi apparatus. The protein resides in the trans-Golgi network membrane. It localises to the prevacuolar compartment membrane. Its subcellular location is the vacuole membrane. The protein localises to the vacuole lumen. It catalyses the reaction Hydrolysis of terminal non-reducing beta-D-fructofuranoside residues in beta-D-fructofuranosides.. It participates in glycan biosynthesis; sucrose metabolism. Its activity is regulated as follows. Inhibited by C/VIF1 and C/VIF2. Possible role in the continued mobilization of sucrose to sink organs. Regulates root elongation. This chain is Acid beta-fructofuranosidase 4, vacuolar, found in Arabidopsis thaliana (Mouse-ear cress).